Reading from the N-terminus, the 109-residue chain is Nucleoid-associated protein AHA_2212 (109 aa).

Disordered regions lie at residues M1–K23 and N88–F109. Positions M11–K23 are enriched in low complexity.

The protein belongs to the YbaB/EbfC family. In terms of assembly, homodimer.

The protein localises to the cytoplasm. The protein resides in the nucleoid. Its function is as follows. Binds to DNA and alters its conformation. May be involved in regulation of gene expression, nucleoid organization and DNA protection. This Aeromonas hydrophila subsp. hydrophila (strain ATCC 7966 / DSM 30187 / BCRC 13018 / CCUG 14551 / JCM 1027 / KCTC 2358 / NCIMB 9240 / NCTC 8049) protein is Nucleoid-associated protein AHA_2212.